Reading from the N-terminus, the 371-residue chain is Histidinol-phosphate aminotransferase (371 aa).

Lysine 228 is subject to N6-(pyridoxal phosphate)lysine.

The protein belongs to the class-II pyridoxal-phosphate-dependent aminotransferase family. Histidinol-phosphate aminotransferase subfamily. The cofactor is pyridoxal 5'-phosphate.

It carries out the reaction L-histidinol phosphate + 2-oxoglutarate = 3-(imidazol-4-yl)-2-oxopropyl phosphate + L-glutamate. The protein operates within amino-acid biosynthesis; L-histidine biosynthesis; L-histidine from 5-phospho-alpha-D-ribose 1-diphosphate: step 7/9. The protein is Histidinol-phosphate aminotransferase of Methanococcus aeolicus (strain ATCC BAA-1280 / DSM 17508 / OCM 812 / Nankai-3).